A 406-amino-acid polypeptide reads, in one-letter code: Cholinephosphotransferase 1 (406 aa).

Ala-2 is subject to N-acetylalanine. Residues Ala-2–Ala-62 are Cytoplasmic-facing. Residues Pro-63–Ser-83 form a helical membrane-spanning segment. Position 64 (Asn-64) interacts with CDP-choline. The Lumenal portion of the chain corresponds to Tyr-84 to Pro-93. Residues Tyr-94–Ala-118 form a helical membrane-spanning segment. Asp-111 and Asp-114 together coordinate Mg(2+). Position 119 (Arg-119) interacts with CDP-choline. At Arg-119–Ser-125 the chain is on the cytoplasmic side. Residues Pro-126 to Ala-150 form a helical membrane-spanning segment. Asp-132 is a Mg(2+) binding site. The active-site Proton acceptor is His-133. Asp-136 contacts Mg(2+). Over Ala-151 to Phe-160 the chain is Lumenal. Residues Phe-161–Tyr-179 form a helical membrane-spanning segment. Residues Val-180–Asp-190 are Cytoplasmic-facing. The helical transmembrane segment at Val-191–Phe-207 threads the bilayer. Residues Gly-208 to Ile-222 lie on the Lumenal side of the membrane. The helical transmembrane segment at Lys-223–Leu-248 threads the bilayer. Residues His-249–Leu-265 lie on the Cytoplasmic side of the membrane. A helical membrane pass occupies residues Ser-266–Ile-281. Over Tyr-282–His-293 the chain is Lumenal. The chain crosses the membrane as a helical span at residues Pro-294 to His-316. The Cytoplasmic segment spans residues Met-317–Phe-329. A helical membrane pass occupies residues Leu-330–Gln-339. Topologically, residues Tyr-340–Asp-346 are lumenal. A helical transmembrane segment spans residues Glu-347 to His-376. At Leu-377 to Asp-406 the chain is on the cytoplasmic side.

It belongs to the CDP-alcohol phosphatidyltransferase class-I family. Mg(2+) serves as cofactor. The cofactor is Mn(2+). In terms of tissue distribution, highly expressed in testis, colon, small intestine, heart, prostate and spleen. Also detected in kidney, skeletal muscle, pancreas, leukocytes, ovary and thymus. Weakly expressed in the brain, placenta and lung. Overexpressed in cancerous breast epithelial cell lines.

It localises to the golgi apparatus membrane. It carries out the reaction CDP-choline + a 1,2-diacyl-sn-glycerol = a 1,2-diacyl-sn-glycero-3-phosphocholine + CMP + H(+). It catalyses the reaction 1-octadecanoyl-2-(5Z,8Z,11Z,14Z-eicosatetraenoyl)-sn-glycerol + CDP-choline = 1-octadecanoyl-2-(5Z,8Z,11Z,14Z-eicosatetraenoyl)-sn-glycero-3-phosphocholine + CMP + H(+). The catalysed reaction is 1-hexadecanoyl-2-(9Z-octadecenoyl)-sn-glycerol + CDP-choline = 1-hexadecanoyl-2-(9Z-octadecenoyl)-sn-glycero-3-phosphocholine + CMP + H(+). The enzyme catalyses 1-hexadecanoyl-2-(4Z,7Z,10Z,13Z,16Z,19Z-docosahexaenoyl)-sn-glycerol + CDP-choline = 1-hexadecanoyl-2-(4Z,7Z,10Z,13Z,16Z,19Z-docosahexaenoyl)-sn-glycero-3-phosphocholine + CMP + H(+). It carries out the reaction 1,2-dioctanoyl-sn-glycerol + CDP-choline = 1,2-dioctanoyl-sn-glycero-3-phosphocholine + CMP + H(+). The protein operates within phospholipid metabolism; phosphatidylcholine biosynthesis; phosphatidylcholine from phosphocholine: step 2/2. Its function is as follows. Catalyzes the final step of de novo phosphatidylcholine (PC) synthesis, i.e. the transfer of choline phosphate from CDP-choline to the free hydroxyl of a diacylglycerol (DAG), producing a PC. It thereby plays a central role in the formation and maintenance of vesicular membranes. This is Cholinephosphotransferase 1 from Homo sapiens (Human).